The sequence spans 738 residues: Multifunctional procollagen lysine hydroxylase and glycosyltransferase LH3 (738 aa).

A signal peptide spans 1–24 (MTSSGPGPRFLLLLPLLLPPAASA). The required for glycosyltransferase activity stretch occupies residues 25-290 (SDRPRGRDPV…FCNQDRRTLP (266 aa)). UDP is bound at residue 44–46 (VAT). The N-linked (GlcNAc...) asparagine glycan is linked to N63. Mn(2+) is bound by residues D112, D115, and H253. 112–114 (DSY) contacts UDP. Residue 256–259 (GPTK) participates in UDP binding. Disulfide bonds link C279-C282 and C379-C385. The segment at 295-520 (PPRVFLAVFV…EFGRLLATSR (226 aa)) is accessory region. N-linked (GlcNAc...) asparagine glycosylation is present at N548. A disulfide bond links C563 and C698. 2-oxoglutarate is bound by residues R599 and Y656. The Fe2OG dioxygenase domain occupies 647 to 738 (RAVMNFVVRY…RYIMVSFVDP (92 aa)). Fe cation-binding residues include H667 and D669. The tract at residues 672-715 (TFTLNVALNHKGLDYEGGGCRFLRYDCVISSPRKGWALLHPGRL) is important for dimerization. 2-oxoglutarate is bound at residue N676. Residue H719 coordinates Fe cation. 2-oxoglutarate is bound at residue R729.

As to quaternary structure, homodimer. Fe(2+) serves as cofactor. It depends on L-ascorbate as a cofactor. The cofactor is Mn(2+).

The protein resides in the rough endoplasmic reticulum. The protein localises to the endoplasmic reticulum lumen. It localises to the endoplasmic reticulum membrane. It is found in the secreted. Its subcellular location is the extracellular space. It carries out the reaction L-lysyl-[collagen] + 2-oxoglutarate + O2 = (5R)-5-hydroxy-L-lysyl-[collagen] + succinate + CO2. The catalysed reaction is (5R)-5-hydroxy-L-lysyl-[collagen] + UDP-alpha-D-galactose = (5R)-5-O-(beta-D-galactosyl)-5-hydroxy-L-lysyl-[collagen] + UDP + H(+). The enzyme catalyses (5R)-5-O-(beta-D-galactosyl)-5-hydroxy-L-lysyl-[collagen] + UDP-alpha-D-glucose = (5R)-5-O-[alpha-D-glucosyl-(1-&gt;2)-beta-D-galactosyl]-5-hydroxy-L-lysyl-[collagen] + UDP + H(+). Multifunctional enzyme that catalyzes a series of post-translational modifications on Lys residues in procollagen. Plays a redundant role in catalyzing the formation of hydroxylysine residues in -Xaa-Lys-Gly- sequences in collagens. Plays a redundant role in catalyzing the transfer of galactose onto hydroxylysine groups, giving rise to galactosyl 5-hydroxylysine. Has an essential role by catalyzing the subsequent transfer of glucose moieties, giving rise to 1,2-glucosylgalactosyl-5-hydroxylysine residues. Catalyzes hydroxylation and glycosylation of Lys residues in the MBL1 collagen-like domain, giving rise to hydroxylysine and 1,2-glucosylgalactosyl-5-hydroxylysine residues. Catalyzes hydroxylation and glycosylation of Lys residues in the ADIPOQ collagen-like domain, giving rise to hydroxylysine and 1,2-glucosylgalactosyl-5-hydroxylysine residues. Essential for normal biosynthesis and secretion of type IV collagens. Essential for normal formation of basement membranes. The sequence is that of Multifunctional procollagen lysine hydroxylase and glycosyltransferase LH3 (PLOD3) from Pongo abelii (Sumatran orangutan).